The primary structure comprises 290 residues: Phosphatidylglycerol--prolipoprotein diacylglyceryl transferase (290 aa).

7 helical membrane-spanning segments follow: residues 21 to 41 (VSLHWYGLMYLVGFVFAMWLA), 60 to 80 (LLYAGFLGVFVGGRVGYVLFY), 96 to 116 (WDGGMSFHGGLMGVILVMFWF), 130 to 150 (FIAPLIPFGLGAGRLGNFING), 198 to 218 (SQLYELLLEGVVLFIILNLFI), 225 to 245 (GAVSGLFLIGYGAFRIIVEAF), and 258 to 278 (VISMGQILSVPMVVAGIIMMI). A 1,2-diacyl-sn-glycero-3-phospho-(1'-sn-glycerol) is bound at residue Arg143.

It belongs to the Lgt family.

The protein resides in the cell inner membrane. It carries out the reaction L-cysteinyl-[prolipoprotein] + a 1,2-diacyl-sn-glycero-3-phospho-(1'-sn-glycerol) = an S-1,2-diacyl-sn-glyceryl-L-cysteinyl-[prolipoprotein] + sn-glycerol 1-phosphate + H(+). Its pathway is protein modification; lipoprotein biosynthesis (diacylglyceryl transfer). In terms of biological role, catalyzes the transfer of the diacylglyceryl group from phosphatidylglycerol to the sulfhydryl group of the N-terminal cysteine of a prolipoprotein, the first step in the formation of mature lipoproteins. This Serratia proteamaculans (strain 568) protein is Phosphatidylglycerol--prolipoprotein diacylglyceryl transferase.